The chain runs to 151 residues: MQIILLEKVVNLGNLGDVVKVKDGYARNFLIPQGKAKRANQANLAEFEARRAELERQQAEKLAAAQEVGAKLEGLMVQIARKAGMDGRLFGSVTNADVAEALAAQGFEIERSTVRMPDGPLKQIGDTQLEVALHSDVVVSITVSVLGEQQQ.

Belongs to the bacterial ribosomal protein bL9 family.

Binds to the 23S rRNA. In Azoarcus sp. (strain BH72), this protein is Large ribosomal subunit protein bL9.